Here is a 480-residue protein sequence, read N- to C-terminus: MNTPLYKALIQHARRNSHSFHVPGHHNGDVFFDDAKSIFDPLLTIDVTELAGLDDLHHPSGVIKEAQELASQLYGSAESFFLVNGTTVGNLAMILSVCEPGDTILVQRNCHKSVFHAVDLSGAEPVYLAPDVDSAMHVPTHVPLGTIKEALEAYPDAKGLVLTNPTYYGHSADLTEIITEAHHYGIPVLVDEAHGAHFILGEPFPVSALKMGADIVVQSAHKTLPAMTMGSYLHLNSSCRINRDRVAEYLNRLQSSSPSYPIMASLDIARAYVQHIIEEQKLSDILQRIETLKQTFDSLTNAEAVNPANPLIITDPLKLTIRSKRGHSGYTLQSILERANIFTELADENQVLLVLPLGGKRRINAEIIRSIDEEIEKTPPDQTFVSAEWGVQPVTVLPYPKKVLHSFKKEYVSFEEAAGRLNAEDIIPYPPGIPMIMAGERITKESVQKLSRLISMKTHVQGNMKIKEKQLLVYIEEEKS.

An N6-(pyridoxal phosphate)lysine modification is found at lysine 222.

Belongs to the Orn/Lys/Arg decarboxylase class-I family. Pyridoxal 5'-phosphate serves as cofactor.

This is an uncharacterized protein from Bacillus subtilis (strain 168).